Here is a 518-residue protein sequence, read N- to C-terminus: Membrane-bound lytic murein transglycosylase F (518 aa).

The N-terminal stretch at 1–21 (MKKLKINYLFIGILALLLAVA) is a signal peptide. A non-LT domain region spans residues 22-269 (LWPSIPWFGK…RIEEKYLGHG (248 aa)). The tract at residues 270-518 (DDFDYVDTRT…SRKGSEEKQN (249 aa)) is LT domain. Glutamate 314 is a catalytic residue.

In the N-terminal section; belongs to the bacterial solute-binding protein 3 family. This sequence in the C-terminal section; belongs to the transglycosylase Slt family.

Its subcellular location is the cell outer membrane. It catalyses the reaction Exolytic cleavage of the (1-&gt;4)-beta-glycosidic linkage between N-acetylmuramic acid (MurNAc) and N-acetylglucosamine (GlcNAc) residues in peptidoglycan, from either the reducing or the non-reducing ends of the peptidoglycan chains, with concomitant formation of a 1,6-anhydrobond in the MurNAc residue.. Murein-degrading enzyme that degrades murein glycan strands and insoluble, high-molecular weight murein sacculi, with the concomitant formation of a 1,6-anhydromuramoyl product. Lytic transglycosylases (LTs) play an integral role in the metabolism of the peptidoglycan (PG) sacculus. Their lytic action creates space within the PG sacculus to allow for its expansion as well as for the insertion of various structures such as secretion systems and flagella. This Escherichia coli O157:H7 protein is Membrane-bound lytic murein transglycosylase F.